Here is a 378-residue protein sequence, read N- to C-terminus: Anhydro-N-acetylmuramic acid kinase (378 aa).

9-16 (GTSVDGID) contributes to the ATP binding site.

Belongs to the anhydro-N-acetylmuramic acid kinase family.

It catalyses the reaction 1,6-anhydro-N-acetyl-beta-muramate + ATP + H2O = N-acetyl-D-muramate 6-phosphate + ADP + H(+). It participates in amino-sugar metabolism; 1,6-anhydro-N-acetylmuramate degradation. It functions in the pathway cell wall biogenesis; peptidoglycan recycling. Catalyzes the specific phosphorylation of 1,6-anhydro-N-acetylmuramic acid (anhMurNAc) with the simultaneous cleavage of the 1,6-anhydro ring, generating MurNAc-6-P. Is required for the utilization of anhMurNAc either imported from the medium or derived from its own cell wall murein, and thus plays a role in cell wall recycling. The chain is Anhydro-N-acetylmuramic acid kinase from Microcystis aeruginosa (strain NIES-843 / IAM M-2473).